Here is a 672-residue protein sequence, read N- to C-terminus: Acetoacetyl-CoA synthetase (672 aa).

Belongs to the ATP-dependent AMP-binding enzyme family.

The protein localises to the cytoplasm. It is found in the cytosol. It catalyses the reaction acetoacetate + ATP + CoA = acetoacetyl-CoA + AMP + diphosphate. Functionally, activates acetoacetate to acetoacetyl-CoA. In Xenopus tropicalis (Western clawed frog), this protein is Acetoacetyl-CoA synthetase (aacs).